The chain runs to 295 residues: MEKLQFQGGARAIDEYAEYRRIVGDDDGGKLFTPEEYEEYKKTVLPMRLQNRLYVSWRSPTGMDCKLVGPETPCFCTHRYKQHKTDFQELPKERPLLLPCRVSKCACKSFHYIPLNGSRPIRCRCKHFADEHSVAGTYHCTQCTKCSGFHSSFTCGCSQPAYTHDTVVETKEERLAQGKPVGHDVPFAAMGGLTGFSSLAEGYMRLDESGAGAPSTSFLESSESGTSHPFLKMYYQPIKVQAVSEPSGIVTQVSNMRISEDDDMAYFERRYQERLLKEKEQKRQKNSKPPTTNRP.

Residues 272 to 283 are compositionally biased toward basic and acidic residues; sequence QERLLKEKEQKR. Positions 272-295 are disordered; that stretch reads QERLLKEKEQKRQKNSKPPTTNRP.

Belongs to the FAM221 family.

The sequence is that of Protein FAM221A (fam221a) from Xenopus tropicalis (Western clawed frog).